The chain runs to 198 residues: Superoxide dismutase [Fe] (198 aa).

Fe cation-binding residues include H27, H74, D158, and H162.

This sequence belongs to the iron/manganese superoxide dismutase family. In terms of assembly, homodimer. The cofactor is Fe cation.

The protein localises to the cytoplasm. It carries out the reaction 2 superoxide + 2 H(+) = H2O2 + O2. Its function is as follows. Destroys superoxide anion radicals which are normally produced within the cells and which are toxic to biological systems. This chain is Superoxide dismutase [Fe] (SODB), found in Plasmodium falciparum (isolate HB3).